Consider the following 185-residue polypeptide: Small ribosomal subunit protein uS4c (185 aa).

Positions 72-134 constitute an S4 RNA-binding domain; it reads MRLDNVIFRL…PTSCNALKGE (63 aa). A disordered region spans residues 132–154; the sequence is KGESPGGGETPDHLTASLSEGSR.

This sequence belongs to the universal ribosomal protein uS4 family. Part of the 30S ribosomal subunit. Contacts protein S5. The interaction surface between S4 and S5 is involved in control of translational fidelity.

It is found in the plastid. It localises to the chloroplast. In terms of biological role, one of the primary rRNA binding proteins, it binds directly to 16S rRNA where it nucleates assembly of the body of the 30S subunit. With S5 and S12 plays an important role in translational accuracy. This chain is Small ribosomal subunit protein uS4c (rps4), found in Woodwardia unigemmata (Chainfern).